The primary structure comprises 353 residues: Guanine nucleotide-binding protein subunit alpha (353 aa).

The disordered stretch occupies residues 1–21 (MGCGMSTEEKEGKARNEEIEN). A lipid anchor (N-myristoyl glycine) is attached at Gly-2. A lipid anchor (S-palmitoyl cysteine) is attached at Cys-3. Basic and acidic residues predominate over residues 7–21 (TEEKEGKARNEEIEN). Residues 32–353 (NEIKMLLLGA…QENLRLCGLI (322 aa)) form the G-alpha domain. Positions 35-48 (KMLLLGAGESGKST) are G1 motif. The GTP site is built by Glu-43, Ser-44, Gly-45, Lys-46, Ser-47, Thr-48, Asp-150, Leu-175, Thr-181, Gly-203, Asn-269, Lys-270, Asp-272, and Ala-325. Ser-47 provides a ligand contact to Mg(2+). The segment at 173–181 (DVLRSRVKT) is G2 motif. Thr-181 contacts Mg(2+). Residues 196–205 (YRMFDVGGQR) form a G3 motif region. A G4 motif region spans residues 265–272 (ILFLNKID). The G5 motif stretch occupies residues 323 to 328 (TCATDT).

Belongs to the G-alpha family. G(q) subfamily. In terms of assembly, g proteins are composed of 3 units; alpha, beta and gamma. The alpha chain contains the guanine nucleotide binding site. Mg(2+) is required as a cofactor.

Functionally, guanine nucleotide-binding proteins (G proteins) are involved as modulators or transducers in various transmembrane signaling systems. Plays a role in pathogenicity, specifically in appressorium formation in rice blast disease. Also involved in mating. The sequence is that of Guanine nucleotide-binding protein subunit alpha (MAGB) from Pyricularia oryzae (strain 70-15 / ATCC MYA-4617 / FGSC 8958) (Rice blast fungus).